The sequence spans 514 residues: 2,3-bisphosphoglycerate-independent phosphoglycerate mutase (514 aa).

D14 and S64 together coordinate Mn(2+). Residue S64 is the Phosphoserine intermediate of the active site. Residues H125, 155 to 156 (RD), R187, R193, 263 to 266 (RADR), and K336 contribute to the substrate site. Mn(2+) is bound by residues D403, H407, D444, H445, and H463.

Belongs to the BPG-independent phosphoglycerate mutase family. Monomer. The cofactor is Mn(2+).

The catalysed reaction is (2R)-2-phosphoglycerate = (2R)-3-phosphoglycerate. It participates in carbohydrate degradation; glycolysis; pyruvate from D-glyceraldehyde 3-phosphate: step 3/5. In terms of biological role, catalyzes the interconversion of 2-phosphoglycerate and 3-phosphoglycerate. This Shewanella oneidensis (strain ATCC 700550 / JCM 31522 / CIP 106686 / LMG 19005 / NCIMB 14063 / MR-1) protein is 2,3-bisphosphoglycerate-independent phosphoglycerate mutase.